Here is a 110-residue protein sequence, read N- to C-terminus: uncharacterized protein (110 aa).

Residues 86–110 are disordered; that stretch reads SEEIDEPVMKKRHRRKGSPHRAPFF. The span at 95 to 104 shows a compositional bias: basic residues; that stretch reads KKRHRRKGSP.

This is an uncharacterized protein from Arabidopsis thaliana (Mouse-ear cress).